The chain runs to 463 residues: L-seryl-tRNA(Sec) selenium transferase (463 aa).

Lys295 is modified (N6-(pyridoxal phosphate)lysine).

It belongs to the SelA family. Homodecamer; pentamer of dimers. Binds only one seryl-tRNA(Sec) per dimer. Requires pyridoxal 5'-phosphate as cofactor.

The protein localises to the cytoplasm. The catalysed reaction is L-seryl-tRNA(Sec) + selenophosphate + H(+) = L-selenocysteinyl-tRNA(Sec) + phosphate. Its pathway is aminoacyl-tRNA biosynthesis; selenocysteinyl-tRNA(Sec) biosynthesis; selenocysteinyl-tRNA(Sec) from L-seryl-tRNA(Sec) (bacterial route): step 1/1. Converts seryl-tRNA(Sec) to selenocysteinyl-tRNA(Sec) required for selenoprotein biosynthesis. The polypeptide is L-seryl-tRNA(Sec) selenium transferase (Escherichia coli O139:H28 (strain E24377A / ETEC)).